A 474-amino-acid polypeptide reads, in one-letter code: L-arabinose isomerase 2 (474 aa).

Positions 306, 331, 348, and 447 each coordinate Mn(2+).

The protein belongs to the arabinose isomerase family. Mn(2+) serves as cofactor.

The enzyme catalyses beta-L-arabinopyranose = L-ribulose. Its pathway is carbohydrate degradation; L-arabinose degradation via L-ribulose; D-xylulose 5-phosphate from L-arabinose (bacterial route): step 1/3. Its function is as follows. Catalyzes the conversion of L-arabinose to L-ribulose. In Bacillus licheniformis (strain ATCC 14580 / DSM 13 / JCM 2505 / CCUG 7422 / NBRC 12200 / NCIMB 9375 / NCTC 10341 / NRRL NRS-1264 / Gibson 46), this protein is L-arabinose isomerase 2.